A 121-amino-acid polypeptide reads, in one-letter code: Fumarate reductase subunit D (121 aa).

A run of 3 helical transmembrane segments spans residues 22–42, 57–77, and 100–120; these read GVWFAMITPVTVLLMGILLPL, AFVSHPIGGAFTVLSLSLPMW, and YACYLAAALVTVLATVWVIQL.

It belongs to the FrdD family. Part of an enzyme complex containing four subunits: a flavoprotein (FrdA), an iron-sulfur protein (FrdB), and two hydrophobic anchor proteins (FrdC and FrdD).

Its subcellular location is the cell inner membrane. Anchors the catalytic components of the fumarate reductase complex to the cell membrane, binds quinones. The sequence is that of Fumarate reductase subunit D from Shewanella putrefaciens (strain CN-32 / ATCC BAA-453).